The following is a 252-amino-acid chain: Ditrans,polycis-undecaprenyl-diphosphate synthase ((2E,6E)-farnesyl-diphosphate specific) (252 aa).

Asp25 is an active-site residue. Asp25 serves as a coordination point for Mg(2+). Substrate-binding positions include 26-29 (GNGR), Trp30, Arg38, His42, and 70-72 (SSE). Asn73 functions as the Proton acceptor in the catalytic mechanism. Trp74, Arg76, and Arg193 together coordinate substrate. His198 lines the Mg(2+) pocket. Residue 199–201 (RIS) participates in substrate binding. Glu212 contacts Mg(2+).

The protein belongs to the UPP synthase family. Homodimer. Requires Mg(2+) as cofactor.

The catalysed reaction is 8 isopentenyl diphosphate + (2E,6E)-farnesyl diphosphate = di-trans,octa-cis-undecaprenyl diphosphate + 8 diphosphate. Its function is as follows. Catalyzes the sequential condensation of isopentenyl diphosphate (IPP) with (2E,6E)-farnesyl diphosphate (E,E-FPP) to yield (2Z,6Z,10Z,14Z,18Z,22Z,26Z,30Z,34E,38E)-undecaprenyl diphosphate (di-trans,octa-cis-UPP). UPP is the precursor of glycosyl carrier lipid in the biosynthesis of bacterial cell wall polysaccharide components such as peptidoglycan and lipopolysaccharide. This Salmonella paratyphi A (strain ATCC 9150 / SARB42) protein is Ditrans,polycis-undecaprenyl-diphosphate synthase ((2E,6E)-farnesyl-diphosphate specific).